A 248-amino-acid chain; its full sequence is MSVCLLCEEGADPGALSILAQRWQLTSDDEALMALVLTPERLELRKRDEPKLGAIYVDFVSGTMAHRRKFGGGRGEAVAKAVGIKGNYRPDVVDATAGLGRDAFVLASLGCRVRMLERNPVVAALLDDGLQRGYQDAEIGPWLRERMTLLHASSLTALGDIDPRPEVVYLDPMYPHKQKSALVKKEMRVFQSLVGSDDDADGLLEPARRLATKRVVVKRPDYAPPLANVQAHAASTTKSHRFDIYMPV.

S-adenosyl-L-methionine-binding positions include 101–102 (RD), 117–118 (ER), 153–154 (SS), and D171.

The protein belongs to the methyltransferase superfamily. RsmJ family.

Its subcellular location is the cytoplasm. It carries out the reaction guanosine(1516) in 16S rRNA + S-adenosyl-L-methionine = N(2)-methylguanosine(1516) in 16S rRNA + S-adenosyl-L-homocysteine + H(+). In terms of biological role, specifically methylates the guanosine in position 1516 of 16S rRNA. The protein is Ribosomal RNA small subunit methyltransferase J of Serratia proteamaculans (strain 568).